We begin with the raw amino-acid sequence, 199 residues long: uncharacterized protein (199 aa).

4 helical membrane passes run L41–C61, S72–W92, T109–V129, and V145–L165.

The protein to M.pneumoniae MPN_037.

Its subcellular location is the cell membrane. This is an uncharacterized protein from Mycoplasma pneumoniae (strain ATCC 29342 / M129 / Subtype 1) (Mycoplasmoides pneumoniae).